Consider the following 71-residue polypeptide: MAKSQAKKKRGHRLRNGGRDVLLSRGSTPSFSTHGRMTKSKKEILNKRKHKNPYDHTAVDDKDFFVPQKAA.

A compositionally biased stretch (basic residues) spans methionine 1–asparagine 16. 2 disordered regions span residues methionine 1–lysine 39 and lysine 51–alanine 71. A compositionally biased stretch (polar residues) spans arginine 25–glycine 35. Residues lysine 51–phenylalanine 64 show a composition bias toward basic and acidic residues.

This is an uncharacterized protein from Bacillus subtilis (strain 168).